A 112-amino-acid polypeptide reads, in one-letter code: Nucleoid-associated protein lpp2803 (112 aa).

Belongs to the YbaB/EbfC family. In terms of assembly, homodimer.

It is found in the cytoplasm. Its subcellular location is the nucleoid. Functionally, binds to DNA and alters its conformation. May be involved in regulation of gene expression, nucleoid organization and DNA protection. In Legionella pneumophila (strain Paris), this protein is Nucleoid-associated protein lpp2803.